We begin with the raw amino-acid sequence, 239 residues long: Myogenic factor 6 (239 aa).

The interval 27–64 (QHLDMPGVSPLYDGNHSPLSPGPDNVPSETGGESSGDE) is disordered. Residues 96 to 147 (DRRKAATLRERRRLKKINEAFDALKRKSVANPNQRLPKVEILRSAISYIERL) form the bHLH domain. Positions 155–184 (DEQERGQSGASDTRNDKEQNRPSGGDYCWK) are disordered.

Efficient DNA binding requires dimerization with another bHLH protein.

The protein resides in the nucleus. In terms of biological role, involved in muscle differentiation (myogenic factor). Induces fibroblasts to differentiate into myoblasts. Probable sequence specific DNA-binding protein. This chain is Myogenic factor 6 (myf6), found in Tetraodon nigroviridis (Spotted green pufferfish).